A 265-amino-acid chain; its full sequence is Protein N-terminal and lysine N-methyltransferase EFM7 (265 aa).

S-adenosyl-L-methionine-binding positions include tryptophan 55, 81-83, aspartate 103, tryptophan 141, and alanine 169; that span reads GAA.

The protein belongs to the class I-like SAM-binding methyltransferase superfamily. EFM7 family.

It localises to the cytoplasm. S-adenosyl-L-methionine-dependent protein methyltransferase that trimethylates the N-terminal glycine 'Gly-2' of elongation factor 1-alpha, before also catalyzing the mono- and dimethylation of 'Lys-3'. This is Protein N-terminal and lysine N-methyltransferase EFM7 from Gibberella zeae (strain ATCC MYA-4620 / CBS 123657 / FGSC 9075 / NRRL 31084 / PH-1) (Wheat head blight fungus).